The sequence spans 84 residues: uncharacterized protein (84 aa).

It belongs to the csb family.

This is an uncharacterized protein from Dictyostelium discoideum (Social amoeba).